The chain runs to 281 residues: Tryptophan synthase alpha chain (281 aa).

Catalysis depends on proton acceptor residues E49 and D60.

This sequence belongs to the TrpA family. In terms of assembly, tetramer of two alpha and two beta chains.

The catalysed reaction is (1S,2R)-1-C-(indol-3-yl)glycerol 3-phosphate + L-serine = D-glyceraldehyde 3-phosphate + L-tryptophan + H2O. The protein operates within amino-acid biosynthesis; L-tryptophan biosynthesis; L-tryptophan from chorismate: step 5/5. The alpha subunit is responsible for the aldol cleavage of indoleglycerol phosphate to indole and glyceraldehyde 3-phosphate. The protein is Tryptophan synthase alpha chain of Methanocaldococcus jannaschii (strain ATCC 43067 / DSM 2661 / JAL-1 / JCM 10045 / NBRC 100440) (Methanococcus jannaschii).